We begin with the raw amino-acid sequence, 299 residues long: tRNA dimethylallyltransferase (299 aa).

13-20 contributes to the ATP binding site; that stretch reads GPTASGKT. 15–20 contributes to the substrate binding site; that stretch reads TASGKT. Residues 38–41 are interaction with substrate tRNA; it reads DSRQ.

This sequence belongs to the IPP transferase family. Monomer. Mg(2+) serves as cofactor.

The catalysed reaction is adenosine(37) in tRNA + dimethylallyl diphosphate = N(6)-dimethylallyladenosine(37) in tRNA + diphosphate. Its function is as follows. Catalyzes the transfer of a dimethylallyl group onto the adenine at position 37 in tRNAs that read codons beginning with uridine, leading to the formation of N6-(dimethylallyl)adenosine (i(6)A). The chain is tRNA dimethylallyltransferase from Prochlorococcus marinus (strain NATL2A).